Consider the following 473-residue polypeptide: H(+)/Cl(-) exchange transporter ClcA (473 aa).

Topologically, residues 1 to 32 (MKTDTPSLETPQAARLRRRQLIRQLLERDKTP) are cytoplasmic. A helical transmembrane segment spans residues 33 to 69 (LAILFMAAVVGTLVGLAAVAFDKGVAWLQNQRMEALV). Over 70–76 (HTADNYP) the chain is Periplasmic. Residues 77 to 100 (LLLTVAFLCSAVLAMFGYFLVRKY) form a helical membrane-spanning segment. Residues 106–110 (GSGIP) carry the Selectivity filter part_1 motif. Residue S107 coordinates chloride. The helical intramembrane region spans 109–116 (IPEIEGAL). Over 117 to 123 (EDQRPVR) the chain is Cytoplasmic. 2 helical membrane-spanning segments follow: residues 124 to 141 (WWRV…TLGG) and 148 to 166 (EGPT…LDIF). The Selectivity filter part_2 signature appears at 146–150 (GREGP). Residues 167–176 (RLKGDEARHT) lie on the Cytoplasmic side of the membrane. 2 intramembrane regions (helical) span residues 177–189 (LLAT…LAAA) and 193–201 (PLAGILFII). The Cytoplasmic portion of the chain corresponds to 202 to 214 (EEMRPQFRYTLIS). Residues 215–232 (IKAVFIGVIMSTIMYRIF) traverse the membrane as a helical segment. Residues 233 to 252 (NHEVALIDVGKLSDAPLNTL) are Periplasmic-facing. A helical transmembrane segment spans residues 253 to 281 (WLYLILGIIFGIFGPIFNKWVLGMQDLLH). Residues 282–287 (RVHGGN) lie on the Cytoplasmic side of the membrane. The chain crosses the membrane as a helical span at residues 288-309 (ITKWVLMGGAIGGLCGLLGFVA). The Periplasmic portion of the chain corresponds to 310–329 (PATSGGGFNLIPIATAGNFS). A run of 2 helical transmembrane segments spans residues 330 to 349 (MGML…LCFS) and 355 to 376 (GIFA…MVVV). The short motif at 355–359 (GIFAP) is the Selectivity filter part_3 element. Chloride contacts are provided by I356 and F357. The Periplasmic segment spans residues 377 to 386 (ELFPQYHLEA). The helical intramembrane region spans 387-401 (GTFAIAGMGALLAAS). The note=Loop between two helices intramembrane region spans 402 to 404 (IRA). Residues 405 to 416 (PLTGIILVLEMT) constitute an intramembrane region (helical). Positions 417 to 421 (DNYQL) form an intramembrane region, note=Loop between two helices. The chain crosses the membrane as a helical span at residues 422-438 (ILPMIITGLGATLLAQF). The Cytoplasmic segment spans residues 439 to 473 (TGGKPLYSEILARTLAKQEAEQLARSKAASASENT). Y445 contributes to the chloride binding site.

This sequence belongs to the chloride channel (TC 2.A.49) family. ClcA subfamily. In terms of assembly, homodimer.

The protein localises to the cell inner membrane. The catalysed reaction is 2 chloride(in) + H(+)(out) = 2 chloride(out) + H(+)(in). Its function is as follows. Proton-coupled chloride transporter. Functions as antiport system and exchanges two chloride ions for 1 proton. Probably acts as an electrical shunt for an outwardly-directed proton pump that is linked to amino acid decarboxylation, as part of the extreme acid resistance (XAR) response. The polypeptide is H(+)/Cl(-) exchange transporter ClcA (Shigella boydii serotype 4 (strain Sb227)).